Reading from the N-terminus, the 310-residue chain is Ribosomal protein uL3 glutamine methyltransferase (310 aa).

This sequence belongs to the protein N5-glutamine methyltransferase family. PrmB subfamily.

The enzyme catalyses L-glutaminyl-[ribosomal protein uL3] + S-adenosyl-L-methionine = N(5)-methyl-L-glutaminyl-[ribosomal protein uL3] + S-adenosyl-L-homocysteine + H(+). In terms of biological role, specifically methylates large ribosomal subunit protein uL3 on 'Gln-150'. This chain is Ribosomal protein uL3 glutamine methyltransferase, found in Salmonella typhi.